A 540-amino-acid chain; its full sequence is Berberine bridge enzyme-like 16 (540 aa).

Residues 1 to 24 form the signal peptide; that stretch reads MKFWSRPLTFLIIIIYLIIQQVNS. Cysteines 38 and 101 form a disulfide. Asn-59 is a glycosylation site (N-linked (GlcNAc...) asparagine). The 176-residue stretch at 79-254 folds into the FAD-binding PCMH-type domain; that stretch reads STRKPEVIVA…LAWKIKLVRV (176 aa). Positions 116 to 178 form a cross-link, 6-(S-cysteinyl)-8alpha-(pros-histidyl)-FAD (His-Cys); the sequence is HDYEGFSYTS…KVHAFPAGVC (63 aa). N-linked (GlcNAc...) asparagine glycosylation is found at Asn-325 and Asn-496.

Belongs to the oxygen-dependent FAD-linked oxidoreductase family. The cofactor is FAD. In terms of processing, the FAD cofactor is bound via a bicovalent 6-S-cysteinyl, 8alpha-N1-histidyl FAD linkage.

It localises to the secreted. The protein localises to the cell wall. This is Berberine bridge enzyme-like 16 from Arabidopsis thaliana (Mouse-ear cress).